The primary structure comprises 299 residues: ATP phosphoribosyltransferase (299 aa).

Belongs to the ATP phosphoribosyltransferase family. Long subfamily. In terms of assembly, equilibrium between an active dimeric form, an inactive hexameric form and higher aggregates. Interconversion between the various forms is largely reversible and is influenced by the natural substrates and inhibitors of the enzyme. Requires Mg(2+) as cofactor.

The protein localises to the cytoplasm. It carries out the reaction 1-(5-phospho-beta-D-ribosyl)-ATP + diphosphate = 5-phospho-alpha-D-ribose 1-diphosphate + ATP. The protein operates within amino-acid biosynthesis; L-histidine biosynthesis; L-histidine from 5-phospho-alpha-D-ribose 1-diphosphate: step 1/9. Feedback inhibited by histidine. In terms of biological role, catalyzes the condensation of ATP and 5-phosphoribose 1-diphosphate to form N'-(5'-phosphoribosyl)-ATP (PR-ATP). Has a crucial role in the pathway because the rate of histidine biosynthesis seems to be controlled primarily by regulation of HisG enzymatic activity. The polypeptide is ATP phosphoribosyltransferase (Erwinia tasmaniensis (strain DSM 17950 / CFBP 7177 / CIP 109463 / NCPPB 4357 / Et1/99)).